The chain runs to 272 residues: Tryptophan synthase alpha chain (272 aa).

Residues E53 and D64 each act as proton acceptor in the active site.

Belongs to the TrpA family. As to quaternary structure, tetramer of two alpha and two beta chains.

The catalysed reaction is (1S,2R)-1-C-(indol-3-yl)glycerol 3-phosphate + L-serine = D-glyceraldehyde 3-phosphate + L-tryptophan + H2O. It functions in the pathway amino-acid biosynthesis; L-tryptophan biosynthesis; L-tryptophan from chorismate: step 5/5. In terms of biological role, the alpha subunit is responsible for the aldol cleavage of indoleglycerol phosphate to indole and glyceraldehyde 3-phosphate. This chain is Tryptophan synthase alpha chain, found in Xanthomonas campestris pv. campestris (strain 8004).